The following is an 88-amino-acid chain: Small ribosomal subunit protein uS15 (88 aa).

Belongs to the universal ribosomal protein uS15 family. In terms of assembly, part of the 30S ribosomal subunit. Forms a bridge to the 50S subunit in the 70S ribosome, contacting the 23S rRNA.

Its function is as follows. One of the primary rRNA binding proteins, it binds directly to 16S rRNA where it helps nucleate assembly of the platform of the 30S subunit by binding and bridging several RNA helices of the 16S rRNA. In terms of biological role, forms an intersubunit bridge (bridge B4) with the 23S rRNA of the 50S subunit in the ribosome. This Albidiferax ferrireducens (strain ATCC BAA-621 / DSM 15236 / T118) (Rhodoferax ferrireducens) protein is Small ribosomal subunit protein uS15.